The following is a 527-amino-acid chain: Estrogen receptor beta (527 aa).

The interval 1 to 145 (MDVKNSPSSL…SPSSKRDAHF (145 aa)) is modulating. Phosphoserine; by MAPK occurs at positions 84 and 102. NR C4-type zinc fingers lie at residues 146-166 (CAVC…CEGC) and 182-206 (CPAT…LRKC). A DNA-binding region (nuclear receptor) is located at residues 146–211 (CAVCSDYASG…RLRKCYEVGM (66 aa)). Residues 261-495 (SPEQLVLTLL…DLLLEMLNAH (235 aa)) enclose the NR LBD domain. The segment at 505–527 (TRSERNLAEDSESKEGSQKPQAQ) is disordered. Positions 506 to 521 (RSERNLAEDSESKEGS) are enriched in basic and acidic residues.

It belongs to the nuclear hormone receptor family. NR3 subfamily. In terms of assembly, binds DNA as a homodimer. Can form a heterodimer with ESR1. Interacts with NCOA1, NCOA3, NCOA5 and NCOA6 coactivators, leading to a strong increase of transcription of target genes. Interacts with UBE1C and AKAP13. Interacts with DNTTIP2. Interacts with CCDC62 in the presence of estradiol/E2; this interaction seems to enhance the transcription of target genes. Interacts with DNAAF4. Interacts with PRMT2. Interacts with CCAR2 (via N-terminus) in a ligand-independent manner. Interacts with RBM39, in the presence of estradiol (E2). Interacts with STUB1/CHIP. In terms of processing, phosphorylation at Ser-84 and Ser-102 recruits NCOA1.

The protein localises to the nucleus. Its function is as follows. Nuclear hormone receptor. Binds estrogens with an affinity similar to that of ESR1/ER-alpha, and activates expression of reporter genes containing estrogen response elements (ERE) in an estrogen-dependent manner. In Ovis aries (Sheep), this protein is Estrogen receptor beta (ESR2).